The primary structure comprises 275 residues: Phosphate import ATP-binding protein PstB (275 aa).

The 242-residue stretch at 29–270 (VSVRDLNFYY…PTDRRTQDYI (242 aa)) folds into the ABC transporter domain. Residue 61–68 (GPSGCGKS) coordinates ATP.

Belongs to the ABC transporter superfamily. Phosphate importer (TC 3.A.1.7) family. In terms of assembly, the complex is composed of two ATP-binding proteins (PstB), two transmembrane proteins (PstC and PstA) and a solute-binding protein (PstS).

The protein resides in the cell inner membrane. The enzyme catalyses phosphate(out) + ATP + H2O = ADP + 2 phosphate(in) + H(+). Part of the ABC transporter complex PstSACB involved in phosphate import. Responsible for energy coupling to the transport system. The protein is Phosphate import ATP-binding protein PstB of Rhodopseudomonas palustris (strain BisB18).